A 295-amino-acid polypeptide reads, in one-letter code: Phosphatidylglycerol--prolipoprotein diacylglyceryl transferase (295 aa).

The next 4 helical transmembrane spans lie at 28–48 (WYALAYIAGIVIAWRLAVLAT), 69–89 (LLTWIILGVILGGRLGFVLFY), 101–121 (ILMVWQGGMAFHGGLLGVVIA), and 131–151 (IPKLSLADLITHTVAPGLLLG). R152 contributes to the a 1,2-diacyl-sn-glycero-3-phospho-(1'-sn-glycerol) binding site. Helical transmembrane passes span 195 to 215 (QLYEAALEGLLLGTLLLWLVW), 224 to 244 (GLITGVFLAGYGLSRFVVEFF), and 268 to 288 (GLTMGQLLSLPMIALGLWFVL).

This sequence belongs to the Lgt family.

It is found in the cell inner membrane. It carries out the reaction L-cysteinyl-[prolipoprotein] + a 1,2-diacyl-sn-glycero-3-phospho-(1'-sn-glycerol) = an S-1,2-diacyl-sn-glyceryl-L-cysteinyl-[prolipoprotein] + sn-glycerol 1-phosphate + H(+). It participates in protein modification; lipoprotein biosynthesis (diacylglyceryl transfer). Functionally, catalyzes the transfer of the diacylglyceryl group from phosphatidylglycerol to the sulfhydryl group of the N-terminal cysteine of a prolipoprotein, the first step in the formation of mature lipoproteins. This Ruegeria pomeroyi (strain ATCC 700808 / DSM 15171 / DSS-3) (Silicibacter pomeroyi) protein is Phosphatidylglycerol--prolipoprotein diacylglyceryl transferase.